Consider the following 156-residue polypeptide: MPRKGPAPKRPLVNDPVYGSQLVTQLVNKVLLEGKKSLAERIVYGALEQAREKTGTDPVVTLKRALDNVKPALEVRSRRVGGATYQVPVEVRPDRSTTLALRWLVNFSRQRREKTMVERLANEILDASNGLGASVKRREDTHKMAEANRAFAHYRW.

The protein belongs to the universal ribosomal protein uS7 family. Part of the 30S ribosomal subunit. Contacts proteins S9 and S11.

Functionally, one of the primary rRNA binding proteins, it binds directly to 16S rRNA where it nucleates assembly of the head domain of the 30S subunit. Is located at the subunit interface close to the decoding center, probably blocks exit of the E-site tRNA. The chain is Small ribosomal subunit protein uS7 from Mycolicibacterium smegmatis (strain ATCC 700084 / mc(2)155) (Mycobacterium smegmatis).